Here is a 341-residue protein sequence, read N- to C-terminus: Ketol-acid reductoisomerase (NADP(+)) (341 aa).

The KARI N-terminal Rossmann domain occupies 1–182; sequence MATIYYDKDA…GCTRAGVLET (182 aa). NADP(+) contacts are provided by residues 25–28, serine 51, serine 53, and 83–86; these read YGSQ and DQTQ. The active site involves histidine 108. Residue glycine 134 participates in NADP(+) binding. Residues 183 to 328 form the KARI C-terminal knotted domain; that stretch reads TFKEETETDL…KRLRDMMSWI (146 aa). Mg(2+) is bound by residues aspartate 191, glutamate 195, glutamate 227, and glutamate 231. Serine 252 contacts substrate.

This sequence belongs to the ketol-acid reductoisomerase family. Requires Mg(2+) as cofactor.

The catalysed reaction is (2R)-2,3-dihydroxy-3-methylbutanoate + NADP(+) = (2S)-2-acetolactate + NADPH + H(+). It carries out the reaction (2R,3R)-2,3-dihydroxy-3-methylpentanoate + NADP(+) = (S)-2-ethyl-2-hydroxy-3-oxobutanoate + NADPH + H(+). It functions in the pathway amino-acid biosynthesis; L-isoleucine biosynthesis; L-isoleucine from 2-oxobutanoate: step 2/4. Its pathway is amino-acid biosynthesis; L-valine biosynthesis; L-valine from pyruvate: step 2/4. Functionally, involved in the biosynthesis of branched-chain amino acids (BCAA). Catalyzes an alkyl-migration followed by a ketol-acid reduction of (S)-2-acetolactate (S2AL) to yield (R)-2,3-dihydroxy-isovalerate. In the isomerase reaction, S2AL is rearranged via a Mg-dependent methyl migration to produce 3-hydroxy-3-methyl-2-ketobutyrate (HMKB). In the reductase reaction, this 2-ketoacid undergoes a metal-dependent reduction by NADPH to yield (R)-2,3-dihydroxy-isovalerate. In Anaeromyxobacter sp. (strain K), this protein is Ketol-acid reductoisomerase (NADP(+)).